Reading from the N-terminus, the 262-residue chain is Octanoyltransferase (262 aa).

A BPL/LPL catalytic domain is found at 60-248 (GTADELVWLV…AFEMVFGPTR (189 aa)). Substrate is bound by residues 99 to 106 (RGGEYTYH), 179 to 181 (AIG), and 192 to 194 (GLS). Cysteine 210 functions as the Acyl-thioester intermediate in the catalytic mechanism.

It belongs to the LipB family.

The protein resides in the cytoplasm. It catalyses the reaction octanoyl-[ACP] + L-lysyl-[protein] = N(6)-octanoyl-L-lysyl-[protein] + holo-[ACP] + H(+). It functions in the pathway protein modification; protein lipoylation via endogenous pathway; protein N(6)-(lipoyl)lysine from octanoyl-[acyl-carrier-protein]: step 1/2. Catalyzes the transfer of endogenously produced octanoic acid from octanoyl-acyl-carrier-protein onto the lipoyl domains of lipoate-dependent enzymes. Lipoyl-ACP can also act as a substrate although octanoyl-ACP is likely to be the physiological substrate. This is Octanoyltransferase from Sinorhizobium medicae (strain WSM419) (Ensifer medicae).